The chain runs to 243 residues: Proteasome subunit beta (243 aa).

The tract at residues 1–46 (MFNPNNGSEFARNRARLDDTPNPYEPEVGSLPEGDRSQAGSDTVNK) is disordered. Positions 1–48 (MFNPNNGSEFARNRARLDDTPNPYEPEVGSLPEGDRSQAGSDTVNKTG) are cleaved as a propeptide — removed in mature form; by autocatalysis. Catalysis depends on T49, which acts as the Nucleophile.

It belongs to the peptidase T1B family. The 20S proteasome core is composed of 14 alpha and 14 beta subunits that assemble into four stacked heptameric rings, resulting in a barrel-shaped structure. The two inner rings, each composed of seven catalytic beta subunits, are sandwiched by two outer rings, each composed of seven alpha subunits. The catalytic chamber with the active sites is on the inside of the barrel. Has a gated structure, the ends of the cylinder being occluded by the N-termini of the alpha-subunits. Is capped at one or both ends by the proteasome regulatory ATPase, PAN.

It is found in the cytoplasm. The enzyme catalyses Cleavage of peptide bonds with very broad specificity.. The formation of the proteasomal ATPase PAN-20S proteasome complex, via the docking of the C-termini of PAN into the intersubunit pockets in the alpha-rings, triggers opening of the gate for substrate entry. Interconversion between the open-gate and close-gate conformations leads to a dynamic regulation of the 20S proteasome proteolysis activity. Functionally, component of the proteasome core, a large protease complex with broad specificity involved in protein degradation. This Halobacterium salinarum (strain ATCC 29341 / DSM 671 / R1) protein is Proteasome subunit beta.